The primary structure comprises 149 residues: Probable flagellum biosynthesis repressor protein FlbT (149 aa).

The protein belongs to the FlbT family.

Has a post-transcriptional repressor function in flagellum biogenesis. Associates with the 5'-UTR of fljK mRNA and promotes its degradation. This Agrobacterium fabrum (strain C58 / ATCC 33970) (Agrobacterium tumefaciens (strain C58)) protein is Probable flagellum biosynthesis repressor protein FlbT.